Reading from the N-terminus, the 225-residue chain is NAD(P)H-quinone oxidoreductase subunit K, chloroplastic (225 aa).

[4Fe-4S] cluster is bound by residues C43, C44, C108, and C139.

Belongs to the complex I 20 kDa subunit family. NDH is composed of at least 16 different subunits, 5 of which are encoded in the nucleus. It depends on [4Fe-4S] cluster as a cofactor.

The protein localises to the plastid. It localises to the chloroplast thylakoid membrane. It carries out the reaction a plastoquinone + NADH + (n+1) H(+)(in) = a plastoquinol + NAD(+) + n H(+)(out). It catalyses the reaction a plastoquinone + NADPH + (n+1) H(+)(in) = a plastoquinol + NADP(+) + n H(+)(out). In terms of biological role, NDH shuttles electrons from NAD(P)H:plastoquinone, via FMN and iron-sulfur (Fe-S) centers, to quinones in the photosynthetic chain and possibly in a chloroplast respiratory chain. The immediate electron acceptor for the enzyme in this species is believed to be plastoquinone. Couples the redox reaction to proton translocation, and thus conserves the redox energy in a proton gradient. This is NAD(P)H-quinone oxidoreductase subunit K, chloroplastic from Arabidopsis thaliana (Mouse-ear cress).